A 256-amino-acid polypeptide reads, in one-letter code: Imidazole glycerol phosphate synthase subunit HisF (256 aa).

Residues D12 and D131 contribute to the active site.

This sequence belongs to the HisA/HisF family. Heterodimer of HisH and HisF.

Its subcellular location is the cytoplasm. It carries out the reaction 5-[(5-phospho-1-deoxy-D-ribulos-1-ylimino)methylamino]-1-(5-phospho-beta-D-ribosyl)imidazole-4-carboxamide + L-glutamine = D-erythro-1-(imidazol-4-yl)glycerol 3-phosphate + 5-amino-1-(5-phospho-beta-D-ribosyl)imidazole-4-carboxamide + L-glutamate + H(+). Its pathway is amino-acid biosynthesis; L-histidine biosynthesis; L-histidine from 5-phospho-alpha-D-ribose 1-diphosphate: step 5/9. In terms of biological role, IGPS catalyzes the conversion of PRFAR and glutamine to IGP, AICAR and glutamate. The HisF subunit catalyzes the cyclization activity that produces IGP and AICAR from PRFAR using the ammonia provided by the HisH subunit. The sequence is that of Imidazole glycerol phosphate synthase subunit HisF from Bifidobacterium longum (strain NCC 2705).